Consider the following 167-residue polypeptide: MSKKQTKDKANGAKATKTIALNKRARHEYHLEERYEAGLALQGWEVKAIRAGRANIVDGYAYVRSGEIYLIGAQITPLIQASTHTVPVERRDRKLLLHRAEIDKVLSRVEREGYTLVPTALYWSSNKVKLEIALAKGKQNHDKRDAAKDRDWQRDKQRVMRRHNRDA.

The segment covering 139-158 has biased composition (basic and acidic residues); that stretch reads QNHDKRDAAKDRDWQRDKQR. Residues 139–167 form a disordered region; it reads QNHDKRDAAKDRDWQRDKQRVMRRHNRDA.

Belongs to the SmpB family.

Its subcellular location is the cytoplasm. Its function is as follows. Required for rescue of stalled ribosomes mediated by trans-translation. Binds to transfer-messenger RNA (tmRNA), required for stable association of tmRNA with ribosomes. tmRNA and SmpB together mimic tRNA shape, replacing the anticodon stem-loop with SmpB. tmRNA is encoded by the ssrA gene; the 2 termini fold to resemble tRNA(Ala) and it encodes a 'tag peptide', a short internal open reading frame. During trans-translation Ala-aminoacylated tmRNA acts like a tRNA, entering the A-site of stalled ribosomes, displacing the stalled mRNA. The ribosome then switches to translate the ORF on the tmRNA; the nascent peptide is terminated with the 'tag peptide' encoded by the tmRNA and targeted for degradation. The ribosome is freed to recommence translation, which seems to be the essential function of trans-translation. The sequence is that of SsrA-binding protein from Xanthomonas axonopodis pv. citri (strain 306).